We begin with the raw amino-acid sequence, 254 residues long: Ribosomal RNA small subunit methyltransferase G (254 aa).

S-adenosyl-L-methionine-binding positions include Gly84, Phe89, 136–137 (VE), and Arg155. The interval 231-254 (HLYPRAVGIPSKQPLGIQADDNRS) is disordered.

Belongs to the methyltransferase superfamily. RNA methyltransferase RsmG family.

It localises to the cytoplasm. Specifically methylates the N7 position of a guanine in 16S rRNA. The chain is Ribosomal RNA small subunit methyltransferase G from Synechococcus sp. (strain WH7803).